The chain runs to 346 residues: Phenylalanine--tRNA ligase alpha subunit (346 aa).

Glu259 is a Mg(2+) binding site.

It belongs to the class-II aminoacyl-tRNA synthetase family. Phe-tRNA synthetase alpha subunit type 1 subfamily. Tetramer of two alpha and two beta subunits. Requires Mg(2+) as cofactor.

Its subcellular location is the cytoplasm. The catalysed reaction is tRNA(Phe) + L-phenylalanine + ATP = L-phenylalanyl-tRNA(Phe) + AMP + diphosphate + H(+). The chain is Phenylalanine--tRNA ligase alpha subunit from Lactococcus lactis subsp. lactis (strain IL1403) (Streptococcus lactis).